A 129-amino-acid polypeptide reads, in one-letter code: Fluoride-specific ion channel FluC 1 (129 aa).

3 helical membrane-spanning segments follow: residues 43–63, 68–88, and 100–120; these read ASLL…PAWV, VVSL…TFSY, and LLAA…AALG. 2 residues coordinate Na(+): G78 and S81.

Belongs to the fluoride channel Fluc/FEX (TC 1.A.43) family.

It localises to the cell membrane. The enzyme catalyses fluoride(in) = fluoride(out). Na(+) is not transported, but it plays an essential structural role and its presence is essential for fluoride channel function. In terms of biological role, fluoride-specific ion channel. Important for reducing fluoride concentration in the cell, thus reducing its toxicity. The chain is Fluoride-specific ion channel FluC 1 from Frankia casuarinae (strain DSM 45818 / CECT 9043 / HFP020203 / CcI3).